The chain runs to 116 residues: Large ribosomal subunit protein bL20 (116 aa).

Belongs to the bacterial ribosomal protein bL20 family.

Functionally, binds directly to 23S ribosomal RNA and is necessary for the in vitro assembly process of the 50S ribosomal subunit. It is not involved in the protein synthesizing functions of that subunit. The chain is Large ribosomal subunit protein bL20 from Helicobacter pylori (strain P12).